A 115-amino-acid polypeptide reads, in one-letter code: Ribonuclease P protein component (115 aa).

This sequence belongs to the RnpA family. In terms of assembly, consists of a catalytic RNA component (M1 or rnpB) and a protein subunit.

The enzyme catalyses Endonucleolytic cleavage of RNA, removing 5'-extranucleotides from tRNA precursor.. RNaseP catalyzes the removal of the 5'-leader sequence from pre-tRNA to produce the mature 5'-terminus. It can also cleave other RNA substrates such as 4.5S RNA. The protein component plays an auxiliary but essential role in vivo by binding to the 5'-leader sequence and broadening the substrate specificity of the ribozyme. This is Ribonuclease P protein component from Staphylococcus aureus (strain Mu3 / ATCC 700698).